The following is a 795-amino-acid chain: Mitochondrial intermediate peptidase (795 aa).

Residues 1–22 constitute a mitochondrion transit peptide; that stretch reads MLKTLNRRSWTCRQCIRILRRN. H561 contributes to the Zn(2+) binding site. E562 is a catalytic residue. Zn(2+)-binding residues include H565 and H568.

The protein belongs to the peptidase M3 family. Zn(2+) serves as cofactor.

It is found in the mitochondrion matrix. It carries out the reaction Release of an N-terminal octapeptide as second stage of processing of some proteins imported into the mitochondrion.. Functionally, cleaves proteins, imported into the mitochondrion, to their mature size. While most mitochondrial precursor proteins are processed to the mature form in one step by mitochondrial processing peptidase (MPP), the sequential cleavage by MIP of an octapeptide after initial processing by MPP is a required step for a subgroup of nuclear-encoded precursor proteins destined for the matrix or the inner membrane. In Coccidioides immitis (strain RS) (Valley fever fungus), this protein is Mitochondrial intermediate peptidase (OCT1).